The following is a 763-amino-acid chain: Phosphoglycerol transferase I (763 aa).

4 helical membrane passes run 1-21 (MSEL…AWKA), 26-46 (WWFA…ITLF), 77-97 (ILPG…LGWI), and 108-128 (FGYS…SPAF).

Belongs to the OpgB family.

It is found in the cell inner membrane. The enzyme catalyses a phosphatidylglycerol + a membrane-derived-oligosaccharide D-glucose = a 1,2-diacyl-sn-glycerol + a membrane-derived-oligosaccharide 6-(glycerophospho)-D-glucose.. It functions in the pathway glycan metabolism; osmoregulated periplasmic glucan (OPG) biosynthesis. In terms of biological role, transfers a phosphoglycerol residue from phosphatidylglycerol to the membrane-bound nascent glucan backbones. This is Phosphoglycerol transferase I from Escherichia coli O127:H6 (strain E2348/69 / EPEC).